A 450-amino-acid chain; its full sequence is Protein tweety homolog 1 (450 aa).

Residues 1–43 are Extracellular-facing; that stretch reads MGAPPGYRPSAWVHLLHQLPRADFQLRPVPSGFAPRDQEYQQA. Residues 44–64 form a helical membrane-spanning segment; the sequence is LLLVAALAGLGLGLSLIFIAV. Topologically, residues 65 to 88 are cytoplasmic; that stretch reads YLIRFCCCRPPEPPGAKSPPPGGG. A helical membrane pass occupies residues 89 to 109; sequence CVTWSCIAALLVGCAGIGIGF. Residues 110-214 lie on the Extracellular side of the membrane; sequence YGNSETSDGV…DVTFVEEYRW (105 aa). An N-linked (GlcNAc...) asparagine glycan is attached at Asn-130. A helical membrane pass occupies residues 215–235; that stretch reads LAYVLLLLLVLLVCLFTLLGL. The Cytoplasmic segment spans residues 236–240; it reads AKQSK. A helical transmembrane segment spans residues 241–261; the sequence is WLVVVMTAMSLLVLVLSWGSM. At 262–390 the chain is on the extracellular side; it reads GLEAATAVGL…LRGLCEDALE (129 aa). Cystine bridges form between Cys-275–Cys-385 and Cys-303–Cys-370. Asn-284 and Asn-355 each carry an N-linked (GlcNAc...) asparagine glycan. A helical transmembrane segment spans residues 391 to 411; the sequence is GLLFLMLFSLLSAGALATTLC. Over 412–450 the chain is Cytoplasmic; it reads SLPRAWALFPPSDDYDDTDDDDPFNPQESKRFVQWQSSI. The segment at 428–450 is disordered; sequence DTDDDDPFNPQESKRFVQWQSSI. Ser-440 is subject to Phosphoserine.

Belongs to the tweety family. In terms of assembly, homotetramer; disulfide-linked. Homodimer. N-glycosylated. Contains high-mannose, hybrid and complex oligosaccharides.

The protein resides in the cell membrane. It catalyses the reaction chloride(in) = chloride(out). The enzyme catalyses L-glutamate(out) = L-glutamate(in). Its function is as follows. Calcium-independent, swelling-dependent volume-regulated anion channel (VRAC-swell) which plays a pivotal role in the process of regulatory volume decrease (RVD) in the brain through the efflux of anions like chloride and organic osmolytes like glutamate. This chain is Protein tweety homolog 1 (Ttyh1), found in Rattus norvegicus (Rat).